Consider the following 110-residue polypeptide: B3 domain-containing protein LOC_Os02g10420 (110 aa).

Residues 1 to 104 constitute a DNA-binding region (TF-B3); that stretch reads MSAMLNENVP…VLSVTVHKAD (104 aa).

Its subcellular location is the nucleus. This chain is B3 domain-containing protein LOC_Os02g10420, found in Oryza sativa subsp. japonica (Rice).